A 96-amino-acid chain; its full sequence is Ribonuclease P protein component 1 (96 aa).

It belongs to the eukaryotic/archaeal RNase P protein component 1 family. As to quaternary structure, consists of a catalytic RNA component and at least 4-5 protein subunits.

It localises to the cytoplasm. It carries out the reaction Endonucleolytic cleavage of RNA, removing 5'-extranucleotides from tRNA precursor.. In terms of biological role, part of ribonuclease P, a protein complex that generates mature tRNA molecules by cleaving their 5'-ends. The protein is Ribonuclease P protein component 1 of Methanococcus aeolicus (strain ATCC BAA-1280 / DSM 17508 / OCM 812 / Nankai-3).